Consider the following 154-residue polypeptide: Ribosome maturation factor RimP (154 aa).

The protein belongs to the RimP family.

It is found in the cytoplasm. Required for maturation of 30S ribosomal subunits. In Salmonella agona (strain SL483), this protein is Ribosome maturation factor RimP.